The following is a 207-amino-acid chain: MSSSLQSNRQSLNRKVAVMGYPHVGKSALVLRFTQNIFPERYESTIEDQHSKHIAAFHRDYHLRVTDTAGQQEYTVFPRSCSLDINGFILVYAIDDRKSFEMCSNIYEKIVRTYGDTSIPIVIVGNKTDLSTQRVVRAEEGEELARQWDAKFVEITARESNRVHEVFELLLREIEISRGNLSPTERPNGNSPKRNPFKDDGKPCSIS.

GTP-binding residues include Gly-25, Lys-26, Ser-27, Tyr-42, Thr-45, Asn-126, Asp-129, and Ala-157. Residue Ser-27 participates in Mg(2+) binding. An Effector region motif is present at residues Tyr-42 to His-50. Thr-45 provides a ligand contact to Mg(2+). Positions Asn-180 to Lys-193 are enriched in polar residues. The disordered stretch occupies residues Asn-180–Ser-207. Positions Pro-196–Ser-207 are enriched in basic and acidic residues. A Cysteine methyl ester modification is found at Cys-204. Cys-204 carries S-farnesyl cysteine lipidation. Residues Ser-205 to Ser-207 constitute a propeptide, removed in mature form.

Belongs to the small GTPase superfamily. Rheb family.

The protein localises to the cell membrane. The enzyme catalyses GTP + H2O = GDP + phosphate + H(+). Its function is as follows. Binds GTP and exhibits intrinsic GTPase activity. This Caenorhabditis elegans protein is GTP-binding protein Rheb homolog 1 (rheb-1).